Reading from the N-terminus, the 483-residue chain is Threonine synthase-like 2 (483 aa).

Lysine 113 carries the post-translational modification N6-(pyridoxal phosphate)lysine.

Belongs to the threonine synthase family. Pyridoxal 5'-phosphate serves as cofactor.

Acts as a catabolic phospho-lyase on both gamma- and beta-phosphorylated substrates. Degrades O-phospho-threonine (PThr) to alpha-ketobutyrate, ammonia and phosphate. Also degrades O-phospho-homoserine (PHS), but this is not its physiological substrate. This is Threonine synthase-like 2 (Thnsl2) from Mus musculus (Mouse).